Here is a 212-residue protein sequence, read N- to C-terminus: External core antigen (212 aa).

A signal peptide spans 1–19 (MQLFHLCLIISCTCPTVQA). The segment at 25–27 (GWL) is HBEAG. The disordered stretch occupies residues 165–212 (NAPILSTLPETTVVRRRGRSPRRRTPSPRRRRSQSPRRRRSQSRESQC). Basic residues predominate over residues 178-205 (VRRRGRSPRRRTPSPRRRRSQSPRRRRS). A 1; half-length repeat occupies 184–190 (SPRRRTP). A 3 X 8 AA repeats of S-P-R-R-R-R-S-Q region spans residues 184–206 (SPRRRTPSPRRRRSQSPRRRRSQ). A propeptide spanning residues 184–212 (SPRRRTPSPRRRRSQSPRRRRSQSRESQC) is cleaved from the precursor. 2 tandem repeats follow at residues 191 to 198 (SPRRRRSQ) and 199 to 206 (SPRRRRSQ).

It belongs to the orthohepadnavirus precore antigen family. Homodimerizes. In terms of processing, phosphorylated. Cleaved by host furin.

The protein resides in the secreted. It localises to the host nucleus. May regulate immune response to the intracellular capsid in acting as a T-cell tolerogen, by having an immunoregulatory effect which prevents destruction of infected cells by cytotoxic T-cells. This immune regulation may predispose to chronicity during perinatal infections and prevent severe liver injury during adult infections. This chain is External core antigen, found in Hepatitis B virus genotype D subtype ayw (isolate Italy/CI/1992) (HBV-D).